We begin with the raw amino-acid sequence, 362 residues long: Phosphoserine aminotransferase (362 aa).

2 residues coordinate L-glutamate: Ser-9 and Arg-42. Pyridoxal 5'-phosphate is bound by residues 76–77 (GR), Trp-102, Thr-153, Asp-174, and Gln-197. Position 198 is an N6-(pyridoxal phosphate)lysine (Lys-198). Pyridoxal 5'-phosphate is bound at residue 239 to 240 (NT).

This sequence belongs to the class-V pyridoxal-phosphate-dependent aminotransferase family. SerC subfamily. As to quaternary structure, homodimer. The cofactor is pyridoxal 5'-phosphate.

The protein localises to the cytoplasm. The catalysed reaction is O-phospho-L-serine + 2-oxoglutarate = 3-phosphooxypyruvate + L-glutamate. It catalyses the reaction 4-(phosphooxy)-L-threonine + 2-oxoglutarate = (R)-3-hydroxy-2-oxo-4-phosphooxybutanoate + L-glutamate. The protein operates within amino-acid biosynthesis; L-serine biosynthesis; L-serine from 3-phospho-D-glycerate: step 2/3. Its pathway is cofactor biosynthesis; pyridoxine 5'-phosphate biosynthesis; pyridoxine 5'-phosphate from D-erythrose 4-phosphate: step 3/5. Catalyzes the reversible conversion of 3-phosphohydroxypyruvate to phosphoserine and of 3-hydroxy-2-oxo-4-phosphonooxybutanoate to phosphohydroxythreonine. In Escherichia coli O17:K52:H18 (strain UMN026 / ExPEC), this protein is Phosphoserine aminotransferase.